We begin with the raw amino-acid sequence, 298 residues long: NAD-dependent L-serine dehydrogenase (298 aa).

Residues 2–31 (KQIA…NVFD), 65–66 (LP), Pro-66, and Thr-96 each bind NAD(+). The active site involves Lys-171. Lys-246 is a binding site for NAD(+).

Belongs to the HIBADH-related family. As to quaternary structure, homotetramer, dimer of dimers.

The enzyme catalyses L-serine + NAD(+) = aminoacetaldehyde + CO2 + NADH. Its pathway is amino-acid degradation. Functionally, NAD-dependent L-serine dehydrogenase that catalyzes the oxidation of L-serine and methyl-L-serine and is possibly involved in serine catabolism. Has low activity toward beta-hydroxyisobutyrate. The protein is NAD-dependent L-serine dehydrogenase of Pseudomonas aeruginosa (strain ATCC 15692 / DSM 22644 / CIP 104116 / JCM 14847 / LMG 12228 / 1C / PRS 101 / PAO1).